Here is a 149-residue protein sequence, read N- to C-terminus: uncharacterized protein (149 aa).

The span at 130–144 (ESNVTKENIEIKEEK) shows a compositional bias: basic and acidic residues. Residues 130-149 (ESNVTKENIEIKEEKEENSE) form a disordered region.

This is an uncharacterized protein from Methanocaldococcus jannaschii (strain ATCC 43067 / DSM 2661 / JAL-1 / JCM 10045 / NBRC 100440) (Methanococcus jannaschii).